The following is a 346-amino-acid chain: LRP2-binding protein (346 aa).

The TPR repeat unit spans residues 58 to 91; that stretch reads AMAYFLRGQLYFEEGWYEEALAQFEEIQEKDHQA. 6 Sel1-like repeats span residues 92–124, 132–167, 172–205, 206–241, 242–276, and 296–331; these read IYQL…DSSC, FAAA…DNGN, VKAQ…GNGS, LESQ…ERGN, VYAQ…EVHD, and AMAA…RLNP.

In terms of assembly, interacts with LRP2.

It is found in the cytoplasm. Its function is as follows. May act as an adapter that regulates LRP2 function. The protein is LRP2-binding protein (Lrp2bp) of Mus musculus (Mouse).